An 84-amino-acid chain; its full sequence is MPVKEKVGVVISNKMQKTVVVKVESRYPHPIYSKTMIKTRKYLAHDEMSECNIGDQVLVQECRPLSKKKRWSVARIISRSSLIT.

It belongs to the universal ribosomal protein uS17 family. As to quaternary structure, part of the 30S ribosomal subunit.

The protein resides in the plastid. The protein localises to the chloroplast. In terms of biological role, one of the primary rRNA binding proteins, it binds specifically to the 5'-end of 16S ribosomal RNA. This chain is Small ribosomal subunit protein uS17c (rps17), found in Thalassiosira pseudonana (Marine diatom).